Consider the following 318-residue polypeptide: Methionyl-tRNA formyltransferase (318 aa).

112–115 (SILP) contacts (6S)-5,6,7,8-tetrahydrofolate.

This sequence belongs to the Fmt family.

It catalyses the reaction L-methionyl-tRNA(fMet) + (6R)-10-formyltetrahydrofolate = N-formyl-L-methionyl-tRNA(fMet) + (6S)-5,6,7,8-tetrahydrofolate + H(+). Functionally, attaches a formyl group to the free amino group of methionyl-tRNA(fMet). The formyl group appears to play a dual role in the initiator identity of N-formylmethionyl-tRNA by promoting its recognition by IF2 and preventing the misappropriation of this tRNA by the elongation apparatus. This is Methionyl-tRNA formyltransferase from Shewanella frigidimarina (strain NCIMB 400).